Here is a 624-residue protein sequence, read N- to C-terminus: Bifunctional protein ArgH (624 aa).

The interval 1–466 (MALWGGRFTQ…AARDTTLVKV (466 aa)) is argininosuccinate lyase. In terms of domain architecture, N-acetyltransferase spans 464 to 614 (VKVRPARITD…DEVALEFNLS (151 aa)). A probable acetyltransferase region spans residues 467–624 (RPARITDIET…EQIISQVKVA (158 aa)).

It in the N-terminal section; belongs to the lyase 1 family. Argininosuccinate lyase subfamily.

It localises to the cytoplasm. The catalysed reaction is 2-(N(omega)-L-arginino)succinate = fumarate + L-arginine. The protein operates within amino-acid biosynthesis; L-arginine biosynthesis; L-arginine from L-ornithine and carbamoyl phosphate: step 3/3. This Vibrio vulnificus (strain CMCP6) protein is Bifunctional protein ArgH (argH).